A 184-amino-acid chain; its full sequence is TATA-box-binding protein (184 aa).

2 tandem repeats follow at residues 9–85 (IENI…IDKL) and 100–178 (VQNI…KKEL).

Belongs to the TBP family.

Functionally, general factor that plays a role in the activation of archaeal genes transcribed by RNA polymerase. Binds specifically to the TATA box promoter element which lies close to the position of transcription initiation. In Thermoplasma volcanium (strain ATCC 51530 / DSM 4299 / JCM 9571 / NBRC 15438 / GSS1), this protein is TATA-box-binding protein.